The sequence spans 543 residues: Chaperonin GroEL (543 aa).

Residues 30–33 (TLGP), Lys51, 87–91 (DGTTT), Gly415, 480–482 (DAA), and Asp496 each bind ATP.

It belongs to the chaperonin (HSP60) family. In terms of assembly, forms a cylinder of 14 subunits composed of two heptameric rings stacked back-to-back. Interacts with the co-chaperonin GroES.

The protein resides in the cytoplasm. The enzyme catalyses ATP + H2O + a folded polypeptide = ADP + phosphate + an unfolded polypeptide.. Together with its co-chaperonin GroES, plays an essential role in assisting protein folding. The GroEL-GroES system forms a nano-cage that allows encapsulation of the non-native substrate proteins and provides a physical environment optimized to promote and accelerate protein folding. The chain is Chaperonin GroEL from Hydrogenobaculum sp. (strain Y04AAS1).